A 95-amino-acid chain; its full sequence is Large ribosomal subunit protein uL23 (95 aa).

Belongs to the universal ribosomal protein uL23 family. As to quaternary structure, part of the 50S ribosomal subunit. Contacts protein L29, and trigger factor when it is bound to the ribosome.

In terms of biological role, one of the early assembly proteins it binds 23S rRNA. One of the proteins that surrounds the polypeptide exit tunnel on the outside of the ribosome. Forms the main docking site for trigger factor binding to the ribosome. This Desulforapulum autotrophicum (strain ATCC 43914 / DSM 3382 / VKM B-1955 / HRM2) (Desulfobacterium autotrophicum) protein is Large ribosomal subunit protein uL23.